Here is a 637-residue protein sequence, read N- to C-terminus: MLSVGRGIADITGEAADCGMLGYGKSDQRTAGIHQRLRSRAFVFRDDSQDGDARLLLIVAELPLPMQNVNEEVLRRLADLYGDTYSEQNTLITATHTHAGPGGYCGYLLYNLTTSGFRPATFAAIVDGIVESVEHAHADVAPAEVSLSHGELYGASINRSPSAFDRNPPADKAFFPKRVDPHTTLVRIDRGEATVGVIHFFATHGTSMTNRNHLISGDNKGFAAYHWERTVGGADYLAGQPDFIAAFAQTNPGDMSPNVDGPLSPEAPPDREFDNTRRTGLCQFEDAFTQLSGATPIGAGIDARFTYVDLGSVLVRGEYTPDGEERRTGRPMFGAGAMAGTDEGPGFHGFRQGRNPFWDRLSRAMYRLARPTAAAQAPKGIVMPARLPNRIHPFVQEIVPVQLVRIGRLYLIGIPGEPTIVAGLRLRRMVASIVGADLADVLCVGYTNAYIHYVTTPEEYLEQRYEGGSTLFGRWELCALMQTVAELAEAMRDGRPVTLGRRPRPTRELSWVRGAPADAGSFGAVIAEPSATYRPGQAVEAVFVSALPNNDLRRGGTYLEVVRREGASWVRIADDGDWATSFRWQRQGRAGSHVSIRWDVPGDTTPGQYRIVHHGTARDRNGMLTAFSATTREFTVV.

Histidine 34 contacts Mg(2+). Positions 96 and 204 each coordinate Zn(2+). Residue serine 256 is the Nucleophile of the active site. 2 residues coordinate Zn(2+): glutamate 417 and tyrosine 453. Mg(2+)-binding residues include aspartate 575, aspartate 577, and threonine 580.

This sequence belongs to the neutral ceramidase family. Zn(2+) is required as a cofactor. Mg(2+) serves as cofactor.

The enzyme catalyses an N-acylsphing-4-enine + H2O = sphing-4-enine + a fatty acid. The catalysed reaction is an N-acylsphinganine + H2O = sphinganine + a fatty acid. It catalyses the reaction an N-acyl-(4R)-4-hydroxysphinganine + H2O = (4R)-hydroxysphinganine + a fatty acid. It carries out the reaction N-(9Z-octadecenoyl)-sphing-4-enine + H2O = sphing-4-enine + (9Z)-octadecenoate. The enzyme catalyses N-(hexanoyl)sphing-4-enine + H2O = hexanoate + sphing-4-enine. The catalysed reaction is N-hexadecanoylsphing-4-enine + H2O = sphing-4-enine + hexadecanoate. It catalyses the reaction N-octadecanoylsphing-4-enine + H2O = sphing-4-enine + octadecanoate. It carries out the reaction N-eicosanoyl-sphing-4-enine + H2O = eicosanoate + sphing-4-enine. The enzyme catalyses N-(15Z-tetracosenoyl)-sphing-4-enine + H2O = (15Z)-tetracosenoate + sphing-4-enine. The catalysed reaction is N-tetracosanoyl-sphing-4-enine + H2O = tetracosanoate + sphing-4-enine. 90% of activity is inhibited by nickel, zinc and calcium ions. Magnesium, cobalt, copper and manganese ions inhibit between 50 and 80% of activity. Its function is as follows. Catalyzes the cleavage of the N-acyl linkage of the ceramides (Cers) to yield sphingosine (Sph) and free fatty acid. Also catalyzes the synthesis of Cers from Sph and fatty acid. Cers containning C6-C24 fatty acids are well hydrolyzed, and Cers with mono unsaturated fatty acids are much more hydrolyzed than those with saturated fatty acids. The chain is Neutral ceramidase from Mycobacterium tuberculosis (strain ATCC 25618 / H37Rv).